A 264-amino-acid polypeptide reads, in one-letter code: Pro-opiomelanocortin (264 aa).

The signal sequence occupies residues M1–G26. The residue at position 87 (F87) is a Phenylalanine amide. 2 disordered regions span residues G88 to H204 and R219 to M238. Residue N91 is glycosylated (N-linked (GlcNAc...) asparagine). Basic and acidic residues-rich tracts occupy residues Q99–G122 and R130–R142. Glutamic acid 1-amide is present on E131. The residue at position 135 (S135) is an N-acetylserine; in Corticotropin. V147 is modified (valine amide). S165 is modified (phosphoserine). Residues E172–D186 show a composition bias toward basic and acidic residues. Residues D189–R199 are compositionally biased toward low complexity. Over residues R219–Y234 the composition is skewed to basic and acidic residues.

This sequence belongs to the POMC family. Specific enzymatic cleavages at paired basic residues yield the different active peptides. ACTH and MSH are produced by the pituitary gland.

Its subcellular location is the secreted. Stimulates the adrenal glands to release cortisol. Functionally, anorexigenic peptide. Increases the pigmentation of skin by increasing melanin production in melanocytes. Its function is as follows. Increases the pigmentation of skin by increasing melanin production in melanocytes. In terms of biological role, endogenous orexigenic opiate. Endogenous opiate. The chain is Pro-opiomelanocortin (POMC) from Macaca nemestrina (Pig-tailed macaque).